We begin with the raw amino-acid sequence, 127 residues long: Holo-[acyl-carrier-protein] synthase (127 aa).

2 residues coordinate Mg(2+): Asp9 and Glu58.

The protein belongs to the P-Pant transferase superfamily. AcpS family. Requires Mg(2+) as cofactor.

It is found in the cytoplasm. It catalyses the reaction apo-[ACP] + CoA = holo-[ACP] + adenosine 3',5'-bisphosphate + H(+). Its function is as follows. Transfers the 4'-phosphopantetheine moiety from coenzyme A to a Ser of acyl-carrier-protein. The chain is Holo-[acyl-carrier-protein] synthase from Shewanella baltica (strain OS185).